The following is a 79-amino-acid chain: Acyl carrier protein (79 aa).

The region spanning 2-77 (SDVLERVRKI…DAVKFIQERL (76 aa)) is the Carrier domain. The residue at position 37 (Ser37) is an O-(pantetheine 4'-phosphoryl)serine.

Belongs to the acyl carrier protein (ACP) family. In terms of processing, 4'-phosphopantetheine is transferred from CoA to a specific serine of apo-ACP by AcpS. This modification is essential for activity because fatty acids are bound in thioester linkage to the sulfhydryl of the prosthetic group.

It is found in the cytoplasm. Its pathway is lipid metabolism; fatty acid biosynthesis. Carrier of the growing fatty acid chain in fatty acid biosynthesis. In Phenylobacterium zucineum (strain HLK1), this protein is Acyl carrier protein.